The sequence spans 505 residues: Protein FAM114A2 (505 aa).

Residues 1-65 (MSDKDDIETP…KPSSDLETSK (65 aa)) are disordered. Residues 51–63 (KRPETKPSSDLET) are compositionally biased toward basic and acidic residues. 3 positions are modified to phosphoserine: S87, S146, and S209. Positions 268–295 (LNSLSGEELETLKVELEQLKETFSLAEF) form a coiled coil. The tract at residues 342–366 (KSLTKPLAENEEGEKQSEAENTEQV) is disordered.

The protein belongs to the FAM114 family.

This is Protein FAM114A2 (FAM114A2) from Homo sapiens (Human).